The sequence spans 158 residues: Naphthalene 1,2-dioxygenase system, small oxygenase component (158 aa).

The protein belongs to the bacterial ring-hydroxylating dioxygenase beta subunit family. In terms of assembly, the naphthalene dioxygenase (NDO) multicomponent enzyme system is composed of an electron transfer component and a dioxygenase component (iron sulfur protein (ISP)). The electron transfer component is composed of a ferredoxin reductase (NdoR) and a ferredoxin (NdoA), and the dioxygenase component is formed of a heterohexamer (trimer of heterodimers) of three large alpha subunits (NdoB) and three small beta subunits (NdoC).

It functions in the pathway aromatic compound metabolism; naphthalene degradation. Component of the naphthalene dioxygenase (NDO) multicomponent enzyme system which catalyzes the incorporation of both atoms of molecular oxygen into naphthalene to form cis-(1R,2S)-dihydroxy-1,2-dihydronaphthalene. The beta subunit seems to have a structural role in the holoenzyme. The polypeptide is Naphthalene 1,2-dioxygenase system, small oxygenase component (Pseudomonas fluorescens).